We begin with the raw amino-acid sequence, 261 residues long: Uridine-cytidine kinase 2-B (261 aa).

29 to 37 (GGTASGKSS) contributes to the ATP binding site. The substrate site is built by Asp-86, Tyr-114, His-119, Arg-168, Arg-178, and Gln-186. Asp-215 provides a ligand contact to ATP. The segment at 238–261 (RQNGFQNGHGTPRQRRTSESSRPH) is disordered.

This sequence belongs to the uridine kinase family. In terms of assembly, homotetramer.

The enzyme catalyses uridine + ATP = UMP + ADP + H(+). It catalyses the reaction cytidine + ATP = CMP + ADP + H(+). It functions in the pathway pyrimidine metabolism; CTP biosynthesis via salvage pathway; CTP from cytidine: step 1/3. Its pathway is pyrimidine metabolism; UMP biosynthesis via salvage pathway; UMP from uridine: step 1/1. Functionally, phosphorylates uridine and cytidine to uridine monophosphate and cytidine monophosphate. Does not phosphorylate deoxyribonucleosides or purine ribonucleosides. Can use ATP or GTP as a phosphate donor. The polypeptide is Uridine-cytidine kinase 2-B (uck2b) (Danio rerio (Zebrafish)).